Consider the following 183-residue polypeptide: Large ribosomal subunit protein eL18 (183 aa).

A disordered region spans residues 150–183 (RHFGPAPGAPRSHTKPYVRTKGHEKARPSRRANV).

It belongs to the eukaryotic ribosomal protein eL18 family.

Its subcellular location is the cytoplasm. The chain is Large ribosomal subunit protein eL18 (RpL18) from Bombyx mori (Silk moth).